A 57-amino-acid polypeptide reads, in one-letter code: UPF0337 protein SCO0678 (57 aa).

2 stretches are compositionally biased toward basic and acidic residues: residues 1–22 and 42–57; these read MAGN…KEAA and GDAR…VFRH. Residues 1 to 57 are disordered; that stretch reads MAGNEKSRAKMEQAKGKAKEAAGRAVGNERMTAEGRAAQSKGDARQAKEKGKDVFRH.

Belongs to the UPF0337 (CsbD) family.

This Streptomyces coelicolor (strain ATCC BAA-471 / A3(2) / M145) protein is UPF0337 protein SCO0678.